Consider the following 375-residue polypeptide: Actin-binding Rho-activating protein (375 aa).

2 stretches are compositionally biased toward basic and acidic residues: residues 1–11 (MAPGEREREAG) and 79–99 (KPDR…SHIK). Disordered stretches follow at residues 1–20 (MAPG…LRKV) and 38–99 (NENS…SHIK). A phosphoserine mark is found at Ser150 and Ser182. Positions 173–182 (QEEPTWKSDS) are enriched in basic and acidic residues. The segment at 173–204 (QEEPTWKSDSVDTEDSGYGGDMEERPEQDAAP) is disordered. 2 actin-binding regions span residues 193-293 (DMEE…AERA) and 294-375 (KRAE…TLLE). Interaction with actin stretches follow at residues 234–279 (SQVD…GDEG) and 346–375 (MRAR…TLLE).

Binds F-actin and ABLIM1, ABLIM2 and ABLIM3. Interaction with ABLIM2 and ABLIM3 enhances activity. Expressed specifically in heart and skeletal muscle.

It is found in the cytoplasm. The protein resides in the myofibril. It localises to the sarcomere. Its subcellular location is the cytoskeleton. Acts as an activator of serum response factor (SRF)-dependent transcription possibly by inducing nuclear translocation of MKL1 or MKL2 and through a mechanism requiring Rho-actin signaling. This chain is Actin-binding Rho-activating protein, found in Mus musculus (Mouse).